We begin with the raw amino-acid sequence, 338 residues long: Aspartate carbamoyltransferase catalytic subunit (338 aa).

Arg-72 and Thr-73 together coordinate carbamoyl phosphate. An L-aspartate-binding site is contributed by Lys-100. Positions 122, 152, and 155 each coordinate carbamoyl phosphate. The L-aspartate site is built by Arg-186 and Arg-243. Carbamoyl phosphate contacts are provided by Gly-284 and Pro-285.

This sequence belongs to the aspartate/ornithine carbamoyltransferase superfamily. ATCase family. Heterododecamer (2C3:3R2) of six catalytic PyrB chains organized as two trimers (C3), and six regulatory PyrI chains organized as three dimers (R2).

The catalysed reaction is carbamoyl phosphate + L-aspartate = N-carbamoyl-L-aspartate + phosphate + H(+). It participates in pyrimidine metabolism; UMP biosynthesis via de novo pathway; (S)-dihydroorotate from bicarbonate: step 2/3. Its function is as follows. Catalyzes the condensation of carbamoyl phosphate and aspartate to form carbamoyl aspartate and inorganic phosphate, the committed step in the de novo pyrimidine nucleotide biosynthesis pathway. The chain is Aspartate carbamoyltransferase catalytic subunit from Acinetobacter baumannii (strain AB307-0294).